The sequence spans 415 residues: Protein PIN-LIKES 4 (415 aa).

Over 1–13 (MKLLELFIASSKP) the chain is Lumenal. A helical membrane pass occupies residues 14-34 (VVETLLITSVGFYLALDTVNL). The Cytoplasmic portion of the chain corresponds to 35 to 44 (LGHDARKHLN). Residues 45 to 61 (NIVFYVFSPSLIGSRLA) form a helical membrane-spanning segment. Residues 62-75 (DSVTYESLVKMWFM) lie on the Lumenal side of the membrane. A helical transmembrane segment spans residues 76–96 (PVNVLLTFMIGSLLGWIVIVI). Over 97–106 (TKPPSQLRGL) the chain is Cytoplasmic. Residues 107–127 (IISCCASGNLGTMPLIIIPAI) traverse the membrane as a helical segment. Topologically, residues 128-143 (CKEKGGPFGDSESCEK) are lumenal. The chain crosses the membrane as a helical span at residues 144 to 161 (YGMGYVTLSMTAFFISVY). Over 162–244 (KHDTNWYVSG…RVVSLSKKVN (83 aa)) the chain is Cytoplasmic. A helical transmembrane segment spans residues 245–265 (LGSIFAPATIAAIIALVIGLI). Residues 266 to 285 (TPLRNLIIGTVAPFRVIQDS) lie on the Lumenal side of the membrane. Residues 286-306 (LTLLGDGAIPAMTLILGGNLL) traverse the membrane as a helical segment. The Cytoplasmic segment spans residues 307 to 322 (KGMRRSEVRSSEMKNS). A helical transmembrane segment spans residues 323–343 (CIIGVLVARYILLPVSGVLLV). Over 344 to 355 (RGAYKLDLVTSE) the chain is Lumenal. The helical transmembrane segment at 356-376 (PLYQFVLLLQYAVPPAMNLGT) threads the bilayer. The Cytoplasmic portion of the chain corresponds to 377–389 (KTQLFGAGESECS). The chain crosses the membrane as a helical span at residues 390–410 (VIMLWTYSLAAVSLTVWPTFF). Residues 411–415 (MWLVT) lie on the Lumenal side of the membrane.

This sequence belongs to the auxin efflux carrier (TC 2.A.69.2) family. Expressed in seedlings, rosette and cauline leaves, stems, flowers and siliques.

The protein resides in the endoplasmic reticulum membrane. Its function is as follows. Involved in cellular auxin homeostasis by regulating auxin metabolism. Regulates intracellular auxin accumulation at the endoplasmic reticulum and thus auxin availability for nuclear auxin signaling. The chain is Protein PIN-LIKES 4 from Arabidopsis thaliana (Mouse-ear cress).